Reading from the N-terminus, the 140-residue chain is ATP synthase epsilon chain (140 aa).

Belongs to the ATPase epsilon chain family. As to quaternary structure, F-type ATPases have 2 components, CF(1) - the catalytic core - and CF(0) - the membrane proton channel. CF(1) has five subunits: alpha(3), beta(3), gamma(1), delta(1), epsilon(1). CF(0) has three main subunits: a, b and c.

The protein localises to the cell inner membrane. Its function is as follows. Produces ATP from ADP in the presence of a proton gradient across the membrane. In Thermodesulfovibrio yellowstonii (strain ATCC 51303 / DSM 11347 / YP87), this protein is ATP synthase epsilon chain.